Here is a 367-residue protein sequence, read N- to C-terminus: tRNA-dihydrouridine(20a/20b) synthase [NAD(P)+] (367 aa).

Residues 45–47 and Gln99 contribute to the FMN site; that span reads PMV. The active-site Proton donor is the Cys128. FMN contacts are provided by residues Lys169, His197, 231–233, and 255–256; these read NGD and VR.

It belongs to the Dus family. Dus4 subfamily. FMN is required as a cofactor.

It catalyses the reaction 5,6-dihydrouridine(20a) in tRNA + NADP(+) = uridine(20a) in tRNA + NADPH + H(+). It carries out the reaction 5,6-dihydrouridine(20a) in tRNA + NAD(+) = uridine(20a) in tRNA + NADH + H(+). The enzyme catalyses 5,6-dihydrouridine(20b) in tRNA + NAD(+) = uridine(20b) in tRNA + NADH + H(+). The catalysed reaction is 5,6-dihydrouridine(20b) in tRNA + NADP(+) = uridine(20b) in tRNA + NADPH + H(+). It catalyses the reaction a 5,6-dihydrouridine in mRNA + NAD(+) = a uridine in mRNA + NADH + H(+). It carries out the reaction a 5,6-dihydrouridine in mRNA + NADP(+) = a uridine in mRNA + NADPH + H(+). Functionally, catalyzes the synthesis of dihydrouridine, a modified base found in the D-loop of most tRNAs. Specifically modifies U20a and U20b in cytoplasmic tRNAs. Also able to mediate dihydrouridylation of some mRNAs, thereby affecting their translation. This is tRNA-dihydrouridine(20a/20b) synthase [NAD(P)+] from Saccharomyces cerevisiae (strain ATCC 204508 / S288c) (Baker's yeast).